Here is a 437-residue protein sequence, read N- to C-terminus: UDP-glucosyl transferase 79L3 (437 aa).

The active-site Proton acceptor is histidine 18. Residue aspartate 117 is the Charge relay of the active site. UDP is bound by residues serine 254, tryptophan 312, valine 313, histidine 330, serine 335, and glutamate 338.

This sequence belongs to the UDP-glycosyltransferase family. In terms of tissue distribution, mainly expressed in flowers, flower buds and young leaves, and, to a lesser extent, in old leaves, stems and roots.

Its pathway is secondary metabolite biosynthesis; terpenoid biosynthesis. Component of the oleanane-type triterpene saponins (e.g. saponarioside A and saponarioside B) biosynthetic pathway, leading to the production of natural products with detergent properties used as traditional sources of soap. A glycosyltransferase that mediates the conversion of QA-triFR to QA-triFRX via the elongation of the C-28 sugar chain with a D-xylose. The polypeptide is UDP-glucosyl transferase 79L3 (Saponaria officinalis (Common soapwort)).